The following is a 633-amino-acid chain: DNA-directed RNA polymerase subunit gamma (633 aa).

The Zn(2+) site is built by Cys-74, Cys-76, Cys-89, and Cys-92. Asp-471, Asp-473, and Asp-475 together coordinate Mg(2+).

The protein belongs to the RNA polymerase beta' chain family. RpoC1 subfamily. In terms of assembly, in cyanobacteria the RNAP catalytic core is composed of 2 alpha, 1 beta, 1 beta', 1 gamma and 1 omega subunit. When a sigma factor is associated with the core the holoenzyme is formed, which can initiate transcription. Mg(2+) serves as cofactor. The cofactor is Zn(2+).

The catalysed reaction is RNA(n) + a ribonucleoside 5'-triphosphate = RNA(n+1) + diphosphate. DNA-dependent RNA polymerase catalyzes the transcription of DNA into RNA using the four ribonucleoside triphosphates as substrates. The chain is DNA-directed RNA polymerase subunit gamma from Prochlorococcus marinus (strain MIT 9211).